The primary structure comprises 300 residues: Ornithine carbamoyltransferase (300 aa).

Carbamoyl phosphate is bound by residues serine 51–threonine 54, glutamine 78, arginine 102, and histidine 129–glutamine 132. L-ornithine is bound by residues asparagine 160, aspartate 217, and serine 221–methionine 222. Residues cysteine 257–leucine 258 and arginine 285 each bind carbamoyl phosphate.

Belongs to the aspartate/ornithine carbamoyltransferase superfamily. OTCase family.

The protein resides in the cytoplasm. It catalyses the reaction carbamoyl phosphate + L-ornithine = L-citrulline + phosphate + H(+). The protein operates within amino-acid biosynthesis; L-arginine biosynthesis; L-arginine from L-ornithine and carbamoyl phosphate: step 1/3. Its function is as follows. Reversibly catalyzes the transfer of the carbamoyl group from carbamoyl phosphate (CP) to the N(epsilon) atom of ornithine (ORN) to produce L-citrulline. The protein is Ornithine carbamoyltransferase of Halorhodospira halophila (strain DSM 244 / SL1) (Ectothiorhodospira halophila (strain DSM 244 / SL1)).